Reading from the N-terminus, the 1408-residue chain is MEIEIYDELNSSDSLKQINGLSKLNQFWINQGRDPTLFFTSIIKLISETDNKTTRILCYSILKSCKCTPSDWSLAIPLLVKDLNSDDNEVVISILKTLPHISSIFTELLMMGNADFGPLVRHGNPSVRKTALDTLTSLLFYRKSILQSYKSFVSTGWELIVDRILEEPIPMVYQSSFSAISSLFSEISRSVSHSDELDNSVQKRQVLSYYADWISLKLIDHFDLLLNRAQHIDINQRHSTVNTLTYLVDTISRSSGTPFWPTSFDNNNNNNNNQQINNNNNNNNNNNNNNNNNNNNNNNNNNNNNQNNLINGISSMNLSSITGTTTTTTTTGNSPITSPTSPTSIIANTASSNKTKQISSPQNIVSILVEYFLSQLDSSNDSLVFAVGKAILDLLLTQQNQHNENWINPVLTAFIGLLRREGVSLNPLPILLAIMSVLPMLGDDLLFCTLSRIFPSIKSITDSNQRVSYLIRTFELIIDRHVTSSGKSSLFTPLMTTDCLLMAFQDESSSFREEIIVSMVASHHNILSKYIEIESEKNSNNNNSSSGNSGGGSGGSVKFSTSGNLFYLHQAALNISEVCLKCITWQSERISAIEYCIRFVDWLCRVTLSSSSSSNNSGNGSESQYGIKLISLLRSDLLDQINKIPSDYICLQAVFLICTHLLRSPTNKVYEQSDAGLLISLLRRRFLFLDNQPKFTQYNGNIRDMIMGVSQFGRVSPASLHSLSGYWLGALECLYLMGLHIPSVEATVQRTLEEILATYPHNKSVYSRARFIRRMLFSSTSSALDAQSLGKYSTIRNLNSFTNYTIDFSYCIPIEQLEASNSLHSISDIFAYECKKAITGLVGVHYGSSIRDKSSRDVTLISGASDPVWIEVSHTTHPTLNTITLHVQVTNVIHFSIKNVNIMIGLSGHLDFPYPQTNCKHNIPKLLPEKSYSFEVPLNVSSLDYNLVTFKLTFNQPSGLCESENNINLNNIHTKINNYQQSSDQLLVQSIQQQQQQQQSSSQQQSQQSQQQQYQPQPISSVNSGLSSYSLNSNNSGSLNSSANSHSISTSAVGSPGTASFISSSLLSNAQSSSPTTSSPLSNVINQNIISSSSSSSSNANQITSTTTPSSTTNSNNNTTSSSSSTNPNPNPNSHTNLNSIVGSGINQPIINNQIIQSLSITTNNPSANIIQFSPIEIRCSDYIFDWNQFLIPFKYNKHQFIQQWPRFEAVFSIDVVFEGFVSVASIFDCLSALPLHNVLNSEFGNSNFHFAFSSSTWFNEQFCFTISGMEKCLSFPEDYSIYYTSPNGQSLPKYKVYHARFEFRSSSSSLLASFESIIDQWINKLPRPTSDQFIARLLAPDEKSLFSITNITQDYQAPKNHQSLANTPLSNIVDDEIALLNQWKDFKKSQEQTKKLFSQLALDQDFY.

Disordered regions lie at residues phenylalanine 259–alanine 347, glutamine 998–serine 1055, and serine 1091–asparagine 1139. The segment covering asparagine 266 to asparagine 308 has biased composition (low complexity). Residues leucine 309–leucine 318 are compositionally biased toward polar residues. Low complexity-rich tracts occupy residues serine 319–alanine 347 and glutamine 998–serine 1051.

Belongs to the TPLATE family. Component of the TSET complex, a heterohexamer composed of tstA, tstB, tstC, tstD, tstE and tstF, which may act in plasma membrane turnover. tstA, tstB, tstC and tstD are likely to be the core complex members with tstE and tstF acting as associated scaffold proteins.

The protein is TSET complex member tstA of Dictyostelium discoideum (Social amoeba).